Reading from the N-terminus, the 345-residue chain is Phosphoribosylformylglycinamidine cyclo-ligase (345 aa).

It belongs to the AIR synthase family.

The protein localises to the cytoplasm. The catalysed reaction is 2-formamido-N(1)-(5-O-phospho-beta-D-ribosyl)acetamidine + ATP = 5-amino-1-(5-phospho-beta-D-ribosyl)imidazole + ADP + phosphate + H(+). The protein operates within purine metabolism; IMP biosynthesis via de novo pathway; 5-amino-1-(5-phospho-D-ribosyl)imidazole from N(2)-formyl-N(1)-(5-phospho-D-ribosyl)glycinamide: step 2/2. The sequence is that of Phosphoribosylformylglycinamidine cyclo-ligase from Escherichia coli O127:H6 (strain E2348/69 / EPEC).